The chain runs to 416 residues: Actin-like protein 9 (416 aa).

The interval 1–23 is disordered; it reads MDPNQGNPLEPQDSPEIPKPSLN.

The protein belongs to the actin family. Interacts with ACTL7A.

It is found in the cytoplasmic vesicle. The protein localises to the secretory vesicle. It localises to the acrosome. Its subcellular location is the cytoplasm. The protein resides in the cytoskeleton. It is found in the perinuclear theca. Testis-specic protein that plays an important role in fusion of proacrosomal vesicles and perinuclear theca formation. In Bos taurus (Bovine), this protein is Actin-like protein 9 (ACTL9).